The chain runs to 493 residues: Guanosine-5'-triphosphate,3'-diphosphate pyrophosphatase (493 aa).

Belongs to the GppA/Ppx family. GppA subfamily.

It carries out the reaction guanosine 3'-diphosphate 5'-triphosphate + H2O = guanosine 3',5'-bis(diphosphate) + phosphate + H(+). It participates in purine metabolism; ppGpp biosynthesis; ppGpp from GTP: step 2/2. Its function is as follows. Catalyzes the conversion of pppGpp to ppGpp. Guanosine pentaphosphate (pppGpp) is a cytoplasmic signaling molecule which together with ppGpp controls the 'stringent response', an adaptive process that allows bacteria to respond to amino acid starvation, resulting in the coordinated regulation of numerous cellular activities. The sequence is that of Guanosine-5'-triphosphate,3'-diphosphate pyrophosphatase from Salmonella dublin (strain CT_02021853).